We begin with the raw amino-acid sequence, 566 residues long: DBIRD complex subunit ZNF326 (566 aa).

2 disordered regions span residues 19-81 (HCGV…ESYD) and 145-180 (RPGF…GRGT). Residues 59 to 73 (SHGGGGGGGGGGGNR) show a composition bias toward gly residues. Low complexity predominate over residues 156–165 (SYSSYSSFSS). The short motif at 240 to 263 (KRKMMPQPYNKPGGTFIKKPKMTK) is the Bipartite nuclear localization signal element. A disordered region spans residues 314 to 347 (FGDSKGEGKSEEEEKRRIEARREKQRRRREKNSE). The span at 317-335 (SKGEGKSEEEEKRRIEARR) shows a compositional bias: basic and acidic residues. 2 C2H2 AKAP95-type zinc fingers span residues 359 to 381 (CSFC…SAAH) and 452 to 475 (CSAC…SPDH). The segment at 516 to 566 (PFEINDQAQEQQTEEEDKAEEPAEGEEEEEEEEEEETEEQTDFTLDHTEDN) is disordered. Over residues 527-556 (QTEEEDKAEEPAEGEEEEEEEEEEETEEQT) the composition is skewed to acidic residues.

It belongs to the AKAP95 family. In terms of assembly, component of the DBIRD complex.

It localises to the nucleus. Functionally, core component of the DBIRD complex, a multiprotein complex that acts at the interface between core mRNP particles and RNA polymerase II (RNAPII) and integrates transcript elongation with the regulation of alternative splicing. This Gallus gallus (Chicken) protein is DBIRD complex subunit ZNF326 (ZNF326).